The sequence spans 418 residues: Tyrosine--tRNA ligase (418 aa).

Y34 lines the L-tyrosine pocket. The short motif at 39–48 (PTGDSMHIGH) is the 'HIGH' region element. Positions 166 and 170 each coordinate L-tyrosine. The short motif at 228 to 232 (KFGKT) is the 'KMSKS' region element. Residue K231 participates in ATP binding. The S4 RNA-binding domain maps to 350–418 (QNIVLWLVDA…KKRYFLAHVK (69 aa)).

It belongs to the class-I aminoacyl-tRNA synthetase family. TyrS type 1 subfamily. Homodimer.

It localises to the cytoplasm. The enzyme catalyses tRNA(Tyr) + L-tyrosine + ATP = L-tyrosyl-tRNA(Tyr) + AMP + diphosphate + H(+). Catalyzes the attachment of tyrosine to tRNA(Tyr) in a two-step reaction: tyrosine is first activated by ATP to form Tyr-AMP and then transferred to the acceptor end of tRNA(Tyr). This is Tyrosine--tRNA ligase from Lactiplantibacillus plantarum (strain ATCC BAA-793 / NCIMB 8826 / WCFS1) (Lactobacillus plantarum).